Reading from the N-terminus, the 313-residue chain is MIGRHKHCIALEDFSREEILEVIDLAASMKEVLQRPIKKVPSLRGKMVVNLFFEASTRTRSSFETAAKILSADALNWTSSSSSVTKGETLVDTAKNLEAMRPDVLVIRHSAGGAPRLVAEHVGCSVVSAGDGAHEHPSQGLLDCFTLREKLGTLEGKTVAIVGDVSHSRVARSDLHAFPKLGAKVRLCGPPTMMPAGVERLGATVHTDLREAVDGADAVIMLRIQHERIGDPLIPGTREYSKVWGLNAKKAADWLKPSCVILHPGPINRGVELSPEVADGPRSVILDQVQNGVAVRMAILYLLAGGAGEEARA.

Arg-58 and Thr-59 together coordinate carbamoyl phosphate. Residue Lys-86 coordinates L-aspartate. Residues Arg-108, His-136, and Gln-139 each contribute to the carbamoyl phosphate site. 2 residues coordinate L-aspartate: Arg-169 and Arg-223. 2 residues coordinate carbamoyl phosphate: Gly-265 and Pro-266.

Belongs to the aspartate/ornithine carbamoyltransferase superfamily. ATCase family. As to quaternary structure, heterododecamer (2C3:3R2) of six catalytic PyrB chains organized as two trimers (C3), and six regulatory PyrI chains organized as three dimers (R2).

The enzyme catalyses carbamoyl phosphate + L-aspartate = N-carbamoyl-L-aspartate + phosphate + H(+). It participates in pyrimidine metabolism; UMP biosynthesis via de novo pathway; (S)-dihydroorotate from bicarbonate: step 2/3. Functionally, catalyzes the condensation of carbamoyl phosphate and aspartate to form carbamoyl aspartate and inorganic phosphate, the committed step in the de novo pyrimidine nucleotide biosynthesis pathway. The polypeptide is Aspartate carbamoyltransferase catalytic subunit (Anaeromyxobacter dehalogenans (strain 2CP-1 / ATCC BAA-258)).